A 156-amino-acid polypeptide reads, in one-letter code: Small ribosomal subunit protein uS7 (156 aa).

This sequence belongs to the universal ribosomal protein uS7 family. In terms of assembly, part of the 30S ribosomal subunit. Contacts proteins S9 and S11.

Its function is as follows. One of the primary rRNA binding proteins, it binds directly to 16S rRNA where it nucleates assembly of the head domain of the 30S subunit. Is located at the subunit interface close to the decoding center, probably blocks exit of the E-site tRNA. The polypeptide is Small ribosomal subunit protein uS7 (Gemmatimonas aurantiaca (strain DSM 14586 / JCM 11422 / NBRC 100505 / T-27)).